The chain runs to 233 residues: Sugar fermentation stimulation protein homolog (233 aa).

This sequence belongs to the SfsA family.

The polypeptide is Sugar fermentation stimulation protein homolog (Chelativorans sp. (strain BNC1)).